The primary structure comprises 989 residues: Clumping factor A (989 aa).

A signal peptide spans 1 to 39; that stretch reads MNMKKKEKHAIRKKSIGVASVLVGTLIGFGLLSSKEADA. The YSIRK-G/S signaling motif signature appears at 9 to 20; sequence HAIRKKSIGVAS. Disordered stretches follow at residues 34–205 and 529–960; these read SKEA…VSQA and FNNG…SEDE. The interval 40–542 is ligand binding A region; that stretch reads SENSVTQSDS…SGSGDGIDKP (503 aa). Low complexity predominate over residues 47–65; that stretch reads SDSASNESKSNDSSSVSAA. Positions 71–105 are enriched in polar residues; it reads TNVSDTKTSSNTNNGETSVAQNPAQQETTQSSSTN. Composition is skewed to low complexity over residues 106–132 and 143–162; these read ATTE…ATTQ and NQTS…SVNS. Over residues 163 to 205 the composition is skewed to polar residues; it reads PQNSTNAENVSTTQDTSTEATPSNNESAPQNTDASNKDVVSQA. Residues 547–565 are compositionally biased toward acidic residues; sequence QPDEPGEIEPIPEDSDSDP. Low complexity predominate over residues 566–598; sequence GSDSGSDSNSDSGSDSGSDSTSDSGSDSASDSD. The segment covering 599–917 has biased composition (acidic residues); the sequence is SASDSDSASD…DNDSDSDSNS (319 aa). Residues 918-936 show a composition bias toward low complexity; sequence DSESGSNNNVVPPNSPKNG. A compositionally biased stretch (basic and acidic residues) spans 943 to 952; that stretch reads NEAKDSKEPL. The LPXTG sorting signal signature appears at 952–956; sequence LPDTG. A Pentaglycyl murein peptidoglycan amidated threonine modification is found at Thr-955. A propeptide spans 956–989 (removed by sortase); sequence GSEDEANTSLIWGLLASLGSLLLFRRKKENKDKK.

Belongs to the serine-aspartate repeat-containing protein (SDr) family.

It is found in the secreted. Its subcellular location is the cell wall. Functionally, cell surface-associated protein implicated in virulence. Promotes bacterial attachment exclusively to the gamma-chain of human fibrinogen. Induces formation of bacterial clumps, which diminish the ability of group IIA phospholipase A2 to cause bacterial phospholipid hydrolysis and killing. Significantly decreases macrophage phagocytosis possibly thanks to the clumps, clumped bacteria being too large to be phagocytosed. Dominant factor responsible for human platelet aggregation, which may be an important mechanism for initiating infective endocarditis. This is Clumping factor A (clfA) from Staphylococcus aureus (strain N315).